Consider the following 541-residue polypeptide: Glucose-6-phosphate isomerase (541 aa).

The active-site Proton donor is glutamate 346. Catalysis depends on residues histidine 377 and lysine 506.

This sequence belongs to the GPI family.

The protein localises to the cytoplasm. It carries out the reaction alpha-D-glucose 6-phosphate = beta-D-fructose 6-phosphate. It functions in the pathway carbohydrate biosynthesis; gluconeogenesis. The protein operates within carbohydrate degradation; glycolysis; D-glyceraldehyde 3-phosphate and glycerone phosphate from D-glucose: step 2/4. In terms of biological role, catalyzes the reversible isomerization of glucose-6-phosphate to fructose-6-phosphate. This is Glucose-6-phosphate isomerase from Rhizobium etli (strain CIAT 652).